The following is a 308-amino-acid chain: D-alanine--D-alanine ligase (308 aa).

The ATP-grasp domain maps to 109–302 (KAAYAAAGLP…FGALCRWIVE (194 aa)). 136-186 (MPPPYVIKPYNEGSSVGVYLVPEGAEAAPELADDLPDTLMVEAFVPGRELT) is an ATP binding site. The Mg(2+) site is built by aspartate 253, glutamate 269, and asparagine 271.

Belongs to the D-alanine--D-alanine ligase family. The cofactor is Mg(2+). Mn(2+) is required as a cofactor.

The protein localises to the cytoplasm. It catalyses the reaction 2 D-alanine + ATP = D-alanyl-D-alanine + ADP + phosphate + H(+). Its pathway is cell wall biogenesis; peptidoglycan biosynthesis. Functionally, cell wall formation. The chain is D-alanine--D-alanine ligase from Dinoroseobacter shibae (strain DSM 16493 / NCIMB 14021 / DFL 12).